The sequence spans 294 residues: Phosphatidylserine decarboxylase proenzyme (294 aa).

Catalysis depends on charge relay system; for autoendoproteolytic cleavage activity residues Asp-113, His-169, and Ser-256. The active-site Schiff-base intermediate with substrate; via pyruvic acid; for decarboxylase activity is the Ser-256. At Ser-256 the chain carries Pyruvic acid (Ser); by autocatalysis.

The protein belongs to the phosphatidylserine decarboxylase family. PSD-B subfamily. Prokaryotic type II sub-subfamily. As to quaternary structure, heterodimer of a large membrane-associated beta subunit and a small pyruvoyl-containing alpha subunit. Pyruvate serves as cofactor. Post-translationally, is synthesized initially as an inactive proenzyme. Formation of the active enzyme involves a self-maturation process in which the active site pyruvoyl group is generated from an internal serine residue via an autocatalytic post-translational modification. Two non-identical subunits are generated from the proenzyme in this reaction, and the pyruvate is formed at the N-terminus of the alpha chain, which is derived from the carboxyl end of the proenzyme. The autoendoproteolytic cleavage occurs by a canonical serine protease mechanism, in which the side chain hydroxyl group of the serine supplies its oxygen atom to form the C-terminus of the beta chain, while the remainder of the serine residue undergoes an oxidative deamination to produce ammonia and the pyruvoyl prosthetic group on the alpha chain. During this reaction, the Ser that is part of the protease active site of the proenzyme becomes the pyruvoyl prosthetic group, which constitutes an essential element of the active site of the mature decarboxylase.

It is found in the cell membrane. The catalysed reaction is a 1,2-diacyl-sn-glycero-3-phospho-L-serine + H(+) = a 1,2-diacyl-sn-glycero-3-phosphoethanolamine + CO2. The protein operates within phospholipid metabolism; phosphatidylethanolamine biosynthesis; phosphatidylethanolamine from CDP-diacylglycerol: step 2/2. In terms of biological role, catalyzes the formation of phosphatidylethanolamine (PtdEtn) from phosphatidylserine (PtdSer). This Clostridium perfringens (strain SM101 / Type A) protein is Phosphatidylserine decarboxylase proenzyme.